The following is a 336-amino-acid chain: Glycerol-3-phosphate dehydrogenase [NAD(P)+] (336 aa).

NADPH is bound by residues Ser-16, Tyr-17, His-37, and Lys-111. Residues Lys-111, Gly-140, and Thr-142 each coordinate sn-glycerol 3-phosphate. Residue Ala-144 coordinates NADPH. 5 residues coordinate sn-glycerol 3-phosphate: Lys-196, Asp-249, Ser-259, Arg-260, and Asn-261. Lys-196 functions as the Proton acceptor in the catalytic mechanism. Arg-260 lines the NADPH pocket. NADPH contacts are provided by Val-284 and Glu-286.

This sequence belongs to the NAD-dependent glycerol-3-phosphate dehydrogenase family.

The protein localises to the cytoplasm. It carries out the reaction sn-glycerol 3-phosphate + NAD(+) = dihydroxyacetone phosphate + NADH + H(+). It catalyses the reaction sn-glycerol 3-phosphate + NADP(+) = dihydroxyacetone phosphate + NADPH + H(+). The protein operates within membrane lipid metabolism; glycerophospholipid metabolism. Its function is as follows. Catalyzes the reduction of the glycolytic intermediate dihydroxyacetone phosphate (DHAP) to sn-glycerol 3-phosphate (G3P), the key precursor for phospholipid synthesis. This Haemophilus ducreyi (strain 35000HP / ATCC 700724) protein is Glycerol-3-phosphate dehydrogenase [NAD(P)+].